A 505-amino-acid polypeptide reads, in one-letter code: Serine/threonine-protein kinase D (505 aa).

Positions 9–271 (YEIVKSLGSG…AMYQALHSLI (263 aa)) constitute a Protein kinase domain. Residues 15–23 (LGSGGFGDT) and K40 each bind ATP. D136 (proton acceptor) is an active-site residue. In terms of domain architecture, SH3b spans 436–505 (GASATIGGIP…GWIASQLVNF (70 aa)).

Belongs to the protein kinase superfamily. Ser/Thr protein kinase family.

It carries out the reaction L-seryl-[protein] + ATP = O-phospho-L-seryl-[protein] + ADP + H(+). The catalysed reaction is L-threonyl-[protein] + ATP = O-phospho-L-threonyl-[protein] + ADP + H(+). In Synechocystis sp. (strain ATCC 27184 / PCC 6803 / Kazusa), this protein is Serine/threonine-protein kinase D (spkD).